Here is a 268-residue protein sequence, read N- to C-terminus: Tryptophan synthase alpha chain (268 aa).

Residues glutamate 49 and aspartate 60 each act as proton acceptor in the active site.

The protein belongs to the TrpA family. In terms of assembly, tetramer of two alpha and two beta chains.

The enzyme catalyses (1S,2R)-1-C-(indol-3-yl)glycerol 3-phosphate + L-serine = D-glyceraldehyde 3-phosphate + L-tryptophan + H2O. It participates in amino-acid biosynthesis; L-tryptophan biosynthesis; L-tryptophan from chorismate: step 5/5. The alpha subunit is responsible for the aldol cleavage of indoleglycerol phosphate to indole and glyceraldehyde 3-phosphate. In Shigella boydii serotype 4 (strain Sb227), this protein is Tryptophan synthase alpha chain.